A 282-amino-acid polypeptide reads, in one-letter code: MARNPFRMFPGDLPYYMGTISFTSVVPVDPSQRNPTTSLREMVTTGLIFNPNLTGEQLREYSFSPLVSMGRKAIFADYEGPQRIIHVTIRGRSAEPKTPSEALIMMEKAVRGAFAVPDWVAREYSDPLPHGITHVGDLGFPIGSVHALKMALDTLKIHVPRGVGVPGYEGLCGTTTIKAPRQYRLLTTGVFTKKDLKRTLPEPFFSRFFNQTPEVCAIKTGKNPFSTEIWCMTLGGDSPAPERNEPRNPHSLQDWARLGVMETCLRMSRRGLGSRHHPYHSL.

Residues serine 251 to valine 260 carry the BC-box-like motif.

As to quaternary structure, interacts with host HDAC1. Interacts with host E1-activating enzyme (SAE1/UBA2 heterodimer). Interacts with host retinoblastoma protein. Seems to form a complex with host E4F1 and HDAC1. Seems to form complexes with either CUL2-elongin BC complex-RBX1 or CUL5-elongin BC complex-RBX1. Interacts with TCEB1/Elongin-C, CUL2 and CUL5 in vitro.

Its subcellular location is the host nucleus. Functionally, early protein essential for viral replication. Strong and global transcriptional activator of both viral and cellular genes. Activates transcription by blocking host retinoblastoma protein (RB) and inhibiting the SUMO pathway. Inhibition of host RB leads to the activation of E2F1-dependent transcription and, in particular, of E2F1-regulated S-phase genes. Stimulation of progression from G1 to S phase allows the virus to efficiently use the cellular DNA replicating machinery to achieve viral genome replication. Blocks the SUMO pathway by targeting the E1 enzyme (SAE1/UBA2 heterodimer) to the ubiquitin-proteasome machinery. Mediates SAE1 degradation possibly through the formation of complexes with either CUL2-elongin BC complex-RBX1 or CUL5-elongin BC complex-RBX1. The degradation of UBA2 is probably a consequent effect of SAE1 disappearance. Inhibits HDAC1 sumoylation, thereby interfering with histone deacetylation mediated by HDAC1, leading to activation of transcription. Mediates induction of heat-shock response. Seems to have an antiapoptotic function. The protein is Protein GAM-1 of Galliformes (FAdV-1).